A 245-amino-acid chain; its full sequence is tRNA (guanine-N(7)-)-methyltransferase (245 aa).

Positions 69, 94, 121, and 144 each coordinate S-adenosyl-L-methionine. Aspartate 144 is an active-site residue. Substrate contacts are provided by residues lysine 148, aspartate 180, and 217 to 220 (TKFE). The disordered stretch occupies residues 200-225 (NLSSSGDYVPRPENRPKTKFERRGEG). Positions 209–225 (PRPENRPKTKFERRGEG) are enriched in basic and acidic residues.

This sequence belongs to the class I-like SAM-binding methyltransferase superfamily. TrmB family.

The catalysed reaction is guanosine(46) in tRNA + S-adenosyl-L-methionine = N(7)-methylguanosine(46) in tRNA + S-adenosyl-L-homocysteine. Its pathway is tRNA modification; N(7)-methylguanine-tRNA biosynthesis. Its function is as follows. Catalyzes the formation of N(7)-methylguanine at position 46 (m7G46) in tRNA. The protein is tRNA (guanine-N(7)-)-methyltransferase of Idiomarina loihiensis (strain ATCC BAA-735 / DSM 15497 / L2-TR).